Here is a 446-residue protein sequence, read N- to C-terminus: Sulfoquinovose isomerase (446 aa).

It belongs to the SqvD family.

It catalyses the reaction 6-sulfo-beta-D-quinovose = 6-deoxy-6-sulfo-D-fructose. In terms of biological role, part of the sulfo-TAL (or sulfo-SFT) pathway, a D-sulfoquinovose degradation pathway that produces sulfolactate (SL). Catalyzes the isomerization of sulfoquinovose (SQ) to 6-deoxy-6-sulfo-D-fructose (SF). This chain is Sulfoquinovose isomerase, found in Priestia aryabhattai (Bacillus aryabhattai).